Here is a 464-residue protein sequence, read N- to C-terminus: Argininosuccinate lyase (464 aa).

This sequence belongs to the lyase 1 family. Argininosuccinate lyase subfamily.

Its subcellular location is the cytoplasm. The enzyme catalyses 2-(N(omega)-L-arginino)succinate = fumarate + L-arginine. It participates in amino-acid biosynthesis; L-arginine biosynthesis; L-arginine from L-ornithine and carbamoyl phosphate: step 3/3. The chain is Argininosuccinate lyase from Azotobacter vinelandii (strain DJ / ATCC BAA-1303).